We begin with the raw amino-acid sequence, 182 residues long: Thioredoxin F-type, chloroplastic (182 aa).

The segment at 1–22 is disordered; the sequence is MPLSLRLAPSPTALSPTTGGFS. In terms of domain architecture, Thioredoxin spans 52 to 177; it reads KRGDSSVVRC…LVAAIETARS (126 aa). Active-site nucleophile residues include Cys102 and Cys105. Cys102 and Cys105 are joined by a disulfide.

It belongs to the thioredoxin family. Plant F-type subfamily. In terms of assembly, forms a complex with heterodimeric ferredoxin-thioredoxin reductase (FTR) and ferredoxin.

The protein localises to the plastid. The protein resides in the chloroplast. Participates in various redox reactions through the reversible oxidation of the active center dithiol to a disulfide. The F form is known to activate a number of enzymes of the photosynthetic carbon cycle. The sequence is that of Thioredoxin F-type, chloroplastic (TRXF) from Brassica napus (Rape).